We begin with the raw amino-acid sequence, 118 residues long: Small ribosomal subunit protein uS13 (118 aa).

A disordered region spans residues 99–118 (GQRTRTNARTRKGPRKAIKK).

The protein belongs to the universal ribosomal protein uS13 family. Part of the 30S ribosomal subunit. Forms a loose heterodimer with protein S19. Forms two bridges to the 50S subunit in the 70S ribosome.

Located at the top of the head of the 30S subunit, it contacts several helices of the 16S rRNA. In the 70S ribosome it contacts the 23S rRNA (bridge B1a) and protein L5 of the 50S subunit (bridge B1b), connecting the 2 subunits; these bridges are implicated in subunit movement. Contacts the tRNAs in the A and P-sites. The polypeptide is Small ribosomal subunit protein uS13 (Xylella fastidiosa (strain M23)).